The primary structure comprises 526 residues: Secreted triacylglycerol lipase LIP4 (526 aa).

The first 26 residues, 1 to 26 (MVRLSYVRFGVAWCIAIIIVSGFSNA), serve as a signal peptide directing secretion. N-linked (GlcNAc...) asparagine glycosylation occurs at Asn-186. The Nucleophile role is filled by Ser-195. The N-linked (GlcNAc...) asparagine glycan is linked to Asn-228. Residues Asp-342 and His-376 contribute to the active site. The N-linked (GlcNAc...) asparagine glycan is linked to Asn-377. The segment at 412 to 526 (TGPSASSSAG…TMPAPPLMER (115 aa)) is disordered. Low complexity-rich tracts occupy residues 413–423 (GPSASSSAGGP) and 430–457 (TGGHHTQSGSAHGGHSSEHAASSTHAPA). A glycan (N-linked (GlcNAc...) asparagine) is linked at Asn-462. Over residues 480–490 (PSTGATSPAPS) the composition is skewed to low complexity. Residues 516-526 (RTMPAPPLMER) are compositionally biased toward pro residues.

Belongs to the AB hydrolase superfamily. Lipase family. Class Lip subfamily.

Its subcellular location is the secreted. The enzyme catalyses a triacylglycerol + H2O = a diacylglycerol + a fatty acid + H(+). It catalyses the reaction a monoacylglycerol + H2O = glycerol + a fatty acid + H(+). The catalysed reaction is a diacylglycerol + H2O = a monoacylglycerol + a fatty acid + H(+). Functionally, secreted lipase that hydrolyzes acylglycerol lipids such as triacylglycerols and consequently releases free fatty acid. Can hydrolyze 4-nitrophenyl palmitate to release 4-nitrophenol and palmitoic acid. Due to an absence of fatty acid synthase genes in Malassezia species, secretory lipases are essential for the yeast to generate free fatty acids from degradation of sebum and assimilate them as lipid sources for growth. Plays important roles not only in lipid metabolism but also in the immune response of host cells and pathogenesis. The sequence is that of Secreted triacylglycerol lipase LIP4 from Malassezia furfur (Pityriasis versicolor infection agent).